The sequence spans 154 residues: 8-oxo-dGTP diphosphatase (154 aa).

A Nudix hydrolase domain is found at 1 to 129 (MPQLATICYI…DHTFVEWLLE (129 aa)). Positions 38, 53, 56, and 57 each coordinate Mg(2+). Residues 38 to 59 (GKLERGETPQECAAREILEETG) carry the Nudix box motif.

This sequence belongs to the Nudix hydrolase family. In terms of assembly, homotrimer. Mg(2+) serves as cofactor.

The catalysed reaction is 8-oxo-dGTP + H2O = 8-oxo-dGMP + diphosphate + H(+). Involved in the DNA repair system to avoid A.T to G.C transversions. Degrades 8-oxo-dGTP to the monophosphate, but is also active on all of the nucleoside triphosphates. The sequence is that of 8-oxo-dGTP diphosphatase (mutX) from Streptococcus pneumoniae serotype 4 (strain ATCC BAA-334 / TIGR4).